We begin with the raw amino-acid sequence, 281 residues long: Bifunctional protein FolD (281 aa).

NADP(+) is bound by residues G167–S169 and S192.

This sequence belongs to the tetrahydrofolate dehydrogenase/cyclohydrolase family. In terms of assembly, homodimer.

It carries out the reaction (6R)-5,10-methylene-5,6,7,8-tetrahydrofolate + NADP(+) = (6R)-5,10-methenyltetrahydrofolate + NADPH. The catalysed reaction is (6R)-5,10-methenyltetrahydrofolate + H2O = (6R)-10-formyltetrahydrofolate + H(+). Its pathway is one-carbon metabolism; tetrahydrofolate interconversion. Catalyzes the oxidation of 5,10-methylenetetrahydrofolate to 5,10-methenyltetrahydrofolate and then the hydrolysis of 5,10-methenyltetrahydrofolate to 10-formyltetrahydrofolate. The polypeptide is Bifunctional protein FolD (Alcanivorax borkumensis (strain ATCC 700651 / DSM 11573 / NCIMB 13689 / SK2)).